Reading from the N-terminus, the 207-residue chain is Large ribosomal subunit protein bL25 (207 aa).

This sequence belongs to the bacterial ribosomal protein bL25 family. CTC subfamily. Part of the 50S ribosomal subunit; part of the 5S rRNA/L5/L18/L25 subcomplex. Contacts the 5S rRNA. Binds to the 5S rRNA independently of L5 and L18.

This is one of the proteins that binds to the 5S RNA in the ribosome where it forms part of the central protuberance. This Dictyoglomus turgidum (strain DSM 6724 / Z-1310) protein is Large ribosomal subunit protein bL25.